Reading from the N-terminus, the 427-residue chain is UPF0229 protein KPN78578_11640 (427 aa).

Residues 72-109 (RNRVHPGNDHFVQNDRIERPQGGGGGGGSGQGQASADG) are disordered. Basic and acidic residues predominate over residues 77–90 (PGNDHFVQNDRIER). The segment covering 92 to 102 (QGGGGGGGSGQ) has biased composition (gly residues).

The protein belongs to the UPF0229 family.

This is UPF0229 protein KPN78578_11640 from Klebsiella pneumoniae subsp. pneumoniae (strain ATCC 700721 / MGH 78578).